We begin with the raw amino-acid sequence, 430 residues long: Putrescine 2-hydroxylase (430 aa).

The 116-residue stretch at 88 to 203 folds into the Rieske domain; it reads LYVGHQKLVP…LRDCHGLLFE (116 aa). Residues Cys128, His130, Cys162, and His165 each coordinate [2Fe-2S] cluster.

Belongs to the bacterial ring-hydroxylating dioxygenase alpha subunit family. [2Fe-2S] cluster serves as cofactor.

Its function is as follows. Rieske-type iron sulfur protein that can catalyze in vitro the 2-hydroxylation of putrescine, forming 2-hydroxyputrescine. May be involved in the biosynthesis of the cyclic hydroxamate siderophore alcaligin. This chain is Putrescine 2-hydroxylase, found in Bordetella bronchiseptica (strain ATCC BAA-588 / NCTC 13252 / RB50) (Alcaligenes bronchisepticus).